A 385-amino-acid polypeptide reads, in one-letter code: Putative transporter YthQ (385 aa).

Helical transmembrane passes span 24 to 44, 67 to 87, 106 to 128, 133 to 155, 176 to 193, 197 to 214, 304 to 324, and 365 to 385; these read AVID…FVIY, WLYA…FLME, YALL…IVLP, SVLI…HIFF, TLVR…IVFT, LLAL…IRSL, AFTV…LLVY, and ILHY…LLFT.

It localises to the cell membrane. The chain is Putative transporter YthQ (ythQ) from Bacillus subtilis (strain 168).